The primary structure comprises 331 residues: MITLNNQDQPVPFNSSHPDEYKIAALVFYSCIFIIGLFVNITALWVFSCTTKKRTTVTIYMMNVALVDLIFIMTLPFRMFYYAKDEWPFGEYFCQILGALTVFYPSIALWLLAFISADRYMAIVQPKYAKELKNTCKAVLACVGVWIMTLTTTTPLLLLYKDPDKDSTPATCLKISDIIYLKAVNVLNLTRLTFFFLIPLFIMIGCYLVIIHNLLHGRTSKLKPKVKEKSIRIIITLLVQVLVCFMPFHICFAFLMLGTGENSYNPWGAFTTFLMNLSTCLDVILYYIVSKQFQARVISVMLYRNYLRSMRRKSFRSGSLRSLSNINSEML.

Residues 1–26 (MITLNNQDQPVPFNSSHPDEYKIAAL) lie on the Extracellular side of the membrane. Residue Asn14 is glycosylated (N-linked (GlcNAc...) asparagine). Residues 27–47 (VFYSCIFIIGLFVNITALWVF) traverse the membrane as a helical segment. Residues 48–56 (SCTTKKRTT) are Cytoplasmic-facing. A helical transmembrane segment spans residues 57-77 (VTIYMMNVALVDLIFIMTLPF). Residues 78–95 (RMFYYAKDEWPFGEYFCQ) are Extracellular-facing. The cysteines at positions 94 and 172 are disulfide-linked. Residues 96 to 116 (ILGALTVFYPSIALWLLAFIS) traverse the membrane as a helical segment. Topologically, residues 117–138 (ADRYMAIVQPKYAKELKNTCKA) are cytoplasmic. A helical transmembrane segment spans residues 139–159 (VLACVGVWIMTLTTTTPLLLL). Over 160-191 (YKDPDKDSTPATCLKISDIIYLKAVNVLNLTR) the chain is Extracellular. A helical membrane pass occupies residues 192–212 (LTFFFLIPLFIMIGCYLVIIH). Residues 213-232 (NLLHGRTSKLKPKVKEKSIR) are Cytoplasmic-facing. Residues 233–253 (IIITLLVQVLVCFMPFHICFA) form a helical membrane-spanning segment. At 254-268 (FLMLGTGENSYNPWG) the chain is on the extracellular side. A helical membrane pass occupies residues 269–289 (AFTTFLMNLSTCLDVILYYIV). At 290-331 (SKQFQARVISVMLYRNYLRSMRRKSFRSGSLRSLSNINSEML) the chain is on the cytoplasmic side. Ser322 is modified (phosphoserine).

The protein belongs to the G-protein coupled receptor 1 family. As to expression, expressed in midpiece of spermatozoon (at protein level). Most abundant in testis and spleen. Highly expressed in CD4 and CD8-positive T-cells as well as CD19-positive B-cells.

The protein resides in the cell membrane. The protein localises to the cytoplasmic vesicle membrane. In terms of biological role, g protein-coupled receptor (GPCR) that plays a role in diverse physiological processes particularly within the immune and nervous systems. Becomes active when triggered by various endogenous ligands including endocannabinoid N-arachidonyl glycine (NAGly), delta-9-tetrahydrocannabinol or resolvin D2/RvD2 derived from the omega-3 fatty acid docosahexaenoic acid (DHA). Upon RvD2 binding, facilitates the resolution of inflammation, aiding in tissue repair and homeostasis. Mechanistically, RvD2 ligation initiates Galphas protein coupling, activation of cAMP-PKA signaling pathway and phosphorylation of STAT3, leading to RvD2-stimulated macrophage phagocytosis. Mediates NAGly-induced process of reorganization of actin filaments and induction of acrosomal exocytosis. Activation by N-arachidonoyl glycine (NAGly) can also induce apoptosis in macrophages. Plays a role in homeostasis of CD8+ subsets of intraepithelial lymphocytes (IELs) (CD8alphaalpha and CD8alphabeta IELs) in small intestine by supporting preferential migration of CD8alphaalpha T-cells to intraepithelial compartment over lamina propria compartment, and by mediating their reconstitution into small intestine after bone marrow transplant. Also participates in hypotensive responses, mediating reduction in intraocular and blood pressure. This Homo sapiens (Human) protein is N-arachidonyl glycine receptor (GPR18).